We begin with the raw amino-acid sequence, 115 residues long: Large ribosomal subunit protein bL20 (115 aa).

This sequence belongs to the bacterial ribosomal protein bL20 family.

Functionally, binds directly to 23S ribosomal RNA and is necessary for the in vitro assembly process of the 50S ribosomal subunit. It is not involved in the protein synthesizing functions of that subunit. The chain is Large ribosomal subunit protein bL20 from Chlorobium phaeobacteroides (strain BS1).